The following is a 90-amino-acid chain: Mitochondrial import inner membrane translocase subunit Tim8 A (90 aa).

The Twin CX3C motif signature appears at 36-59 (CWDKCMDKPGPKLDSRAEMCFVNC). Intrachain disulfides connect Cys-36–Cys-59 and Cys-40–Cys-55.

Belongs to the small Tim family. In terms of assembly, heterohexamer; composed of 3 copies of TIMM8A and 3 copies of TIMM13, named soluble 70 kDa complex. Associates with the TIM22 complex, whose core is composed of TIMM22.

It localises to the mitochondrion inner membrane. In terms of biological role, mitochondrial intermembrane chaperone that participates in the import and insertion of some multi-pass transmembrane proteins into the mitochondrial inner membrane. Also required for the transfer of beta-barrel precursors from the TOM complex to the sorting and assembly machinery (SAM complex) of the outer membrane. Acts as a chaperone-like protein that protects the hydrophobic precursors from aggregation and guide them through the mitochondrial intermembrane space. The TIMM8-TIMM13 complex mediates the import of some proteins while the predominant TIMM9-TIMM10 70 kDa complex mediates the import of much more proteins. The polypeptide is Mitochondrial import inner membrane translocase subunit Tim8 A (timm8a) (Takifugu rubripes (Japanese pufferfish)).